The sequence spans 768 residues: Cullin-3 (768 aa).

Ser2 carries the post-translational modification N-acetylserine. An interaction with KLHL18 region spans residues 2–41 (SNLSKGTGSRKDTKMRIRAFPMTMDEKYVNSIWDLLKNAI). A Phosphoserine modification is found at Ser585. The segment at 677 to 698 (VAAKQGESDPERKETRQKVDDD) is disordered. A compositionally biased stretch (basic and acidic residues) spans 682–698 (GESDPERKETRQKVDDD). In terms of domain architecture, Cullin neddylation spans 698–760 (DRKHEIEAAI…REYLARTPED (63 aa)). Lys712 is covalently cross-linked (Glycyl lysine isopeptide (Lys-Gly) (interchain with G-Cter in NEDD8)).

The protein belongs to the cullin family. Forms neddylation-dependent homodimers. Component of multiple BCR (BTB-CUL3-RBX1) E3 ubiquitin-protein ligase complexes formed of CUL3, RBX1 and a variable BTB domain-containing protein acting as both, adapter to cullin and substrate recognition subunit. The BCR complex may be active as a heterodimeric complex, in which NEDD8, covalently attached to one CUL3 molecule, binds to the C-terminus of a second CUL3 molecule. Interacts with RBX1, RNF7, CYCE and TIP120A/CAND1. Part of the BCR(SPOP) containing SPOP, and of BCR containing homodimeric SPOPL or the heterodimer formed by SPOP and SPOPL. Part of the probable BCR(KLHL9-KLHL13) complex with BTB domain proteins KLHL9 and KLHL13. Part of the BCR(KLHL41) complex containing KLHL41. Component of the BCR(KLHL12) E3 ubiquitin ligase complex, at least composed of CUL3 and KLHL12 and RBX1. Component of the BCR(KLHL3) E3 ubiquitin ligase complex, at least composed of CUL3 and KLHL3 and RBX1. Part of the BCR(ENC1) complex containing ENC1. Part of a complex consisting of BMI1/PCGF4, CUL3 and SPOP. Part of a complex consisting of BRMS1, CUL3 and SPOP. Component of the BCR(KLHL21) E3 ubiquitin ligase complex, at least composed of CUL3, KLHL21 and RBX1. Component of the BCR(KLHL22) E3 ubiquitin ligase complex, at least composed of CUL3, KLHL22 and RBX1. Component of the BCR(KLHL25) E3 ubiquitin ligase complex, at least composed of CUL3, KLHL25 and RBX1. Part of a complex consisting of MACROH2A1, CUL3 and SPOP. Component of the BCR(KLHL42) E3 ubiquitin ligase complex, at least composed of CUL3 and KLHL42. Interacts with KLHL42 (via the BTB domain). Interacts with KATNA1; the interaction is enhanced by KLHL42. Component of the BCR(KBTBD8) E3 ubiquitin ligase complex, at least composed of CUL3, KBTBD8 and RBX1. Interacts with KCTD5, KLHL9, KLHL11, KLHL13, GAN, ZBTB16, KLHL3, KLHL15, KLHL20, KLHL36, GMCL2, BTBD1. Part of a complex that contains CUL3, RBX1 and GAN. Interacts (via BTB domain) with KLHL17; the interaction regulates surface GRIK2 expression. Interacts with KCTD7. Part of the BCR(GAN) complex containing GAN. Part of the BCR(KEAP1) complex containing KEAP1. Interacts with KLHL10. Interacts with KAT5 and ATF2. Interacts with KCTD17 in the BCR(KCTD17) E3 ubiquitin ligase complex, at least composed of CUL3, KCTD17 and RBX1. Interacts (when neddylated) with ARIH1; leading to activate the E3 ligase activity of ARIH1. Interacts with COPS9 isoform 2. Interacts with PPP2R5B; this interaction is indirect and mediated through KLHL15-binding and leads to PPP2R5B proteasomal degradation. Interacts with RBBP8/CtIP; this interaction is indirect and mediated through KLHL15-binding and leads to RBBP8 proteasomal degradation. Interacts with KLHL24 in the BCR(KLHL24) E3 ubiquitin ligase complex, composed of CUL3, RBX1 and KLHL24. Interacts with RHOBTB2. Interacts with AURKA and KLHL18 (via BTB domain). Interacts (unneddylated form) with DCUN1D1, DCUN1D2, DCUN1D3, DCUN1D4 and DCUN1D5; these interactions promote the cullin neddylation. Component of a BCR3 (BTB-CUL3-RBX1) E3 ubiquitin ligase complex, also named Cul3-RING ubiquitin ligase complex CUL3(KBTBD6/7), composed of CUL3, RBX1, KBTBD6 and KBTBD7. Component of the BCR(KBTBD2) E3 ubiquitin ligase complex, at least composed of CUL3, KBTBD2 and RBX1. Interacts with KBTBD2 (via the BTB domain). Component of the BCR(KBTBD4) E3 ubiquitin ligase complex, at least composed of CUL3, KBTBD4 and RBX1. Component of the BCR(ARMC5) E3 ubiquitin ligase complex, composed of CUL3, ARMC5 and RBX1. Post-translationally, neddylated. Attachment of NEDD8 is required for the E3 ubiquitin-protein ligase activity of the BCR complex. Deneddylated via its interaction with the COP9 signalosome (CSN) complex. As to expression, brain, spermatozoa, and testis (at protein level). Widely expressed.

The protein resides in the nucleus. Its subcellular location is the golgi apparatus. It localises to the cell projection. The protein localises to the cilium. It is found in the flagellum. The protein resides in the cytoplasm. Its subcellular location is the cytoskeleton. It localises to the spindle. The protein localises to the microtubule organizing center. It is found in the centrosome. The protein resides in the spindle pole. The protein operates within protein modification; protein ubiquitination. Functionally, core component of multiple cullin-RING-based BCR (BTB-CUL3-RBX1) E3 ubiquitin-protein ligase complexes which mediate the ubiquitination and subsequent proteasomal degradation of target proteins. BCR complexes and ARIH1 collaborate in tandem to mediate ubiquitination of target proteins. As a scaffold protein may contribute to catalysis through positioning of the substrate and the ubiquitin-conjugating enzyme. The E3 ubiquitin-protein ligase activity of the complex is dependent on the neddylation of the cullin subunit and is inhibited by the association of the deneddylated cullin subunit with TIP120A/CAND1. The functional specificity of the BCR complex depends on the BTB domain-containing protein as the substrate recognition component. BCR(KLHL42) is involved in ubiquitination of KATNA1. BCR(SPOP) is involved in ubiquitination of BMI1/PCGF4, BRMS1, MACROH2A1 and DAXX, GLI2 and GLI3. Can also form a cullin-RING-based BCR (BTB-CUL3-RBX1) E3 ubiquitin-protein ligase complex containing homodimeric SPOPL or the heterodimer formed by SPOP and SPOPL; these complexes have lower ubiquitin ligase activity. BCR(KLHL9-KLHL13) controls the dynamic behavior of AURKB on mitotic chromosomes and thereby coordinates faithful mitotic progression and completion of cytokinesis. BCR(KLHL12) is involved in ER-Golgi transport by regulating the size of COPII coats, thereby playing a key role in collagen export, which is required for embryonic stem (ES) cells division: BCR(KLHL12) acts by mediating monoubiquitination of SEC31 (SEC31A or SEC31B). BCR(KLHL3) acts as a regulator of ion transport in the distal nephron; by mediating ubiquitination of WNK4. The BCR(KLHL20) E3 ubiquitin ligase complex is involved in interferon response and anterograde Golgi to endosome transport: it mediates both ubiquitination leading to degradation and 'Lys-33'-linked ubiquitination. The BCR(KLHL21) E3 ubiquitin ligase complex regulates localization of the chromosomal passenger complex (CPC) from chromosomes to the spindle midzone in anaphase and mediates the ubiquitination of AURKB. The BCR(KLHL22) ubiquitin ligase complex mediates monoubiquitination of PLK1, leading to PLK1 dissociation from phosphoreceptor proteins and subsequent removal from kinetochores, allowing silencing of the spindle assembly checkpoint (SAC) and chromosome segregation. The BCR(KLHL22) ubiquitin ligase complex is also responsible for the amino acid-stimulated 'Lys-48' polyubiquitination and proteasomal degradation of DEPDC5. Through the degradation of DEPDC5, releases the GATOR1 complex-mediated inhibition of the TORC1 pathway. The BCR(KLHL25) ubiquitin ligase complex is involved in translational homeostasis by mediating ubiquitination and subsequent degradation of hypophosphorylated EIF4EBP1 (4E-BP1). The BCR(KLHL25) ubiquitin ligase complex is also involved in lipid synthesis by mediating ubiquitination and degradation of ACLY. The BCR(KBTBD8) complex acts by mediating monoubiquitination of NOLC1 and TCOF1, leading to remodel the translational program of differentiating cells in favor of neural crest specification. Involved in ubiquitination of cyclin E and of cyclin D1 (in vitro) thus involved in regulation of G1/S transition. Involved in the ubiquitination of KEAP1, ENC1 and KLHL41. In concert with ATF2 and RBX1, promotes degradation of KAT5 thereby attenuating its ability to acetylate and activate ATM. The BCR(KCTD17) E3 ubiquitin ligase complex mediates ubiquitination and degradation of TCHP, a down-regulator of cilium assembly, thereby inducing ciliogenesis. The BCR(KLHL24) E3 ubiquitin ligase complex mediates ubiquitination of KRT14, controls KRT14 levels during keratinocytes differentiation, and is essential for skin integrity. The BCR(KLHL18) E3 ubiquitin ligase complex mediates the ubiquitination of AURKA leading to its activation at the centrosome which is required for initiating mitotic entry. The BCR(KEAP1) E3 ubiquitin ligase complex acts as a key sensor of oxidative and electrophilic stress by mediating ubiquitination and degradation of NFE2L2/NRF2, a transcription factor regulating expression of many cytoprotective genes. As part of the CUL3(KBTBD6/7) E3 ubiquitin ligase complex functions mediates 'Lys-48' ubiquitination and proteasomal degradation of TIAM1. By controlling the ubiquitination of that RAC1 guanine exchange factors (GEF), regulates RAC1 signal transduction and downstream biological processes including the organization of the cytoskeleton, cell migration and cell proliferation. The BCR(KBTBD4) E3 ubiquitin ligase complex targets CoREST corepressor complex components RCOR1, KDM1A/LSD1 and HDAC2 for proteasomal degradation with RCOR1 likely to be the primary target while degradation of KDM1A and HDAC2 is likely due to their association with RCOR1. It also targets RCOR3, MIER2 and MIER3 for proteasomal degradation as well as associated proteins ZNF217 and RREB1 with degradation being dependent on the presence of an ELM2 domain in the target proteins. The BCR(ARMC5) complex mediates premature transcription termination of transcripts that are unfavorably configured for transcriptional elongation by mediating ubiquitination of Pol II subunit POLR2A. Required for 'Lys-63'-linked ubiquitination of large ribosomal subunit protein MRPL12. The polypeptide is Cullin-3 (Homo sapiens (Human)).